A 476-amino-acid polypeptide reads, in one-letter code: MAIKFLEVIKPFCVILPEIQKPERKIQFKEKVLWTAITLFIFLVCCQIPLFGIMSSDSADPFYWMRVILASNRGTLMELGISPIVTSGLIMQLLAGAKIIEVGDTPKDRALFNGAQKLFGMIITIGQSIVYVMTGMYGDPSEMGAGICLLITIQLFVAGLIVLLLDELLQKGYGLGSGISLFIATNICETIVWKAFSPTTVNTGRGMEFEGAIIALFHLLATRTDKVRALREAFYRQNLPNLMNLIATIFVFAVVIYFQGFRVDLPIKSARYRGQYNTYPIKLFYTSNIPIILQSALVSNLYVISQMLSARFSGNLLVSLLGTWSDTSSGGPARAYPVGGLCYYLSPPESFGSVLEDPVHAVVYIVFMLGSCAFFSKTWIEVSGSSAKDVAKQLKEQQMVMRGHRETSMVHELNRYIPTAAAFGGLCIGALSVLADFLGAIGSGTGILLAVTIIYQYFEIFVKEQSEVGSMGALLF.

At 1–33 (MAIKFLEVIKPFCVILPEIQKPERKIQFKEKVL) the chain is on the cytoplasmic side. A helical transmembrane segment spans residues 34–53 (WTAITLFIFLVCCQIPLFGI). Residues 54 to 76 (MSSDSADPFYWMRVILASNRGTL) are Lumenal-facing. The helical transmembrane segment at 77 to 96 (MELGISPIVTSGLIMQLLAG) threads the bilayer. Residues 97-117 (AKIIEVGDTPKDRALFNGAQK) lie on the Cytoplasmic side of the membrane. A helical membrane pass occupies residues 118–138 (LFGMIITIGQSIVYVMTGMYG). The Lumenal segment spans residues 139 to 144 (DPSEMG). A helical transmembrane segment spans residues 145-165 (AGICLLITIQLFVAGLIVLLL). Over 166–172 (DELLQKG) the chain is Cytoplasmic. The helical transmembrane segment at 173-193 (YGLGSGISLFIATNICETIVW) threads the bilayer. The Lumenal portion of the chain corresponds to 194-240 (KAFSPTTVNTGRGMEFEGAIIALFHLLATRTDKVRALREAFYRQNLP). The chain crosses the membrane as a helical span at residues 241-261 (NLMNLIATIFVFAVVIYFQGF). At 262-288 (RVDLPIKSARYRGQYNTYPIKLFYTSN) the chain is on the cytoplasmic side. Residues 289–309 (IPIILQSALVSNLYVISQMLS) traverse the membrane as a helical segment. The Lumenal segment spans residues 310 to 354 (ARFSGNLLVSLLGTWSDTSSGGPARAYPVGGLCYYLSPPESFGSV). The chain crosses the membrane as a helical span at residues 355 to 375 (LEDPVHAVVYIVFMLGSCAFF). Residues 376–420 (SKTWIEVSGSSAKDVAKQLKEQQMVMRGHRETSMVHELNRYIPTA) are Cytoplasmic-facing. Residues 421-441 (AAFGGLCIGALSVLADFLGAI) traverse the membrane as a helical segment. The Lumenal segment spans residues 442–445 (GSGT). A helical transmembrane segment spans residues 446-462 (GILLAVTIIYQYFEIFV). Over 463 to 476 (KEQSEVGSMGALLF) the chain is Cytoplasmic.

The protein belongs to the SecY/SEC61-alpha family. As to quaternary structure, the SEC61 channel-forming translocon complex consists of channel-forming core components SEC61A1, SEC61B and SEC61G and different auxiliary components such as SEC62 and SEC63. The SEC61 channel associates with the multi-pass translocon (MPT) complex. As to expression, expressed in proximal and distal tubules in kidney (at protein level).

The protein localises to the endoplasmic reticulum membrane. Component of SEC61 channel-forming translocon complex that mediates transport of signal peptide-containing precursor polypeptides across the endoplasmic reticulum (ER). Forms a ribosome receptor and a gated pore in the ER membrane, both functions required for cotranslational translocation of nascent polypeptides. May cooperate with auxiliary protein SEC62, SEC63 and HSPA5/BiP to enable post-translational transport of small presecretory proteins. The SEC61 channel is also involved in ER membrane insertion of transmembrane proteins: it mediates membrane insertion of the first few transmembrane segments of proteins, while insertion of subsequent transmembrane regions of multi-pass membrane proteins is mediated by the multi-pass translocon (MPT) complex. The SEC61 channel cooperates with the translocating protein TRAM1 to import nascent proteins into the ER. Controls the passive efflux of calcium ions from the ER lumen to the cytosol through SEC61 channel, contributing to the maintenance of cellular calcium homeostasis. Plays a critical role in nephrogenesis, specifically at pronephros stage. The protein is Protein transport protein Sec61 subunit alpha isoform 1 (SEC61A1) of Homo sapiens (Human).